A 201-amino-acid polypeptide reads, in one-letter code: 3-mercaptopropionate dioxygenase (201 aa).

Positions 89, 91, and 142 each coordinate Fe cation.

The protein belongs to the cysteine dioxygenase family. Forms homodimer in the crystal; however, there is no evidence that the dimer exists under physiological conditions or has biological significance. The cofactor is Fe(2+).

It catalyses the reaction 3-sulfanylpropanoate + O2 = 3-sulfinopropanoate + H(+). Its function is as follows. Thiol dioxygenase that catalyzes the dioxygenation of 3-mercaptopropionate (3-MPA) to 3-sulfinopropionate (3-SPA). To a lesser extent (40-fold lower efficiency), is also able to oxidize cysteine to cysteine sulfinate (CSA). Cannot use N-acetyl-L-cysteine, homocysteine, and cysteamine as substrates. The physiological role of this enzyme is unclear. This Pseudomonas aeruginosa (strain ATCC 15692 / DSM 22644 / CIP 104116 / JCM 14847 / LMG 12228 / 1C / PRS 101 / PAO1) protein is 3-mercaptopropionate dioxygenase.